Consider the following 201-residue polypeptide: Proteinase inhibitor type-2 CEVI57 (201 aa).

A signal peptide spans 1–23 (MAVYKVSFLAHLLVLGMYLLVST). A run of 3 repeats spans residues 27–83 (ANAC…DPKN), 84–143 (PNIC…IEPK), and 144–199 (GCTK…QSIS). Disulfide bonds link cysteine 30–cysteine 118, cysteine 34–cysteine 114, cysteine 42–cysteine 124, cysteine 54–cysteine 91, cysteine 57–cysteine 75, cysteine 58–cysteine 87, cysteine 64–cysteine 100, and cysteine 117–cysteine 135.

It belongs to the protease inhibitor I20 (potato type II proteinase inhibitor) family.

This is Proteinase inhibitor type-2 CEVI57 (CEVI57) from Solanum lycopersicum (Tomato).